We begin with the raw amino-acid sequence, 265 residues long: Translation initiation factor 2 subunit alpha (265 aa).

The 71-residue stretch at 12-82 folds into the S1 motif domain; that stretch reads GELVIGTVKK…KMRVVEVSLK (71 aa).

Belongs to the eIF-2-alpha family. Heterotrimer composed of an alpha, a beta and a gamma chain.

In terms of biological role, eIF-2 functions in the early steps of protein synthesis by forming a ternary complex with GTP and initiator tRNA. The sequence is that of Translation initiation factor 2 subunit alpha from Pyrobaculum aerophilum (strain ATCC 51768 / DSM 7523 / JCM 9630 / CIP 104966 / NBRC 100827 / IM2).